We begin with the raw amino-acid sequence, 190 residues long: Shikimate kinase (190 aa).

Residue 14 to 19 participates in ATP binding; that stretch reads GSGKST. A Mg(2+)-binding site is contributed by serine 18. Residues aspartate 36, arginine 60, and glycine 82 each contribute to the substrate site. Residue arginine 120 coordinates ATP. Substrate is bound at residue arginine 147.

This sequence belongs to the shikimate kinase family. In terms of assembly, monomer. Mg(2+) serves as cofactor.

It localises to the cytoplasm. The catalysed reaction is shikimate + ATP = 3-phosphoshikimate + ADP + H(+). It functions in the pathway metabolic intermediate biosynthesis; chorismate biosynthesis; chorismate from D-erythrose 4-phosphate and phosphoenolpyruvate: step 5/7. Functionally, catalyzes the specific phosphorylation of the 3-hydroxyl group of shikimic acid using ATP as a cosubstrate. The sequence is that of Shikimate kinase from Chlorobium phaeobacteroides (strain DSM 266 / SMG 266 / 2430).